Here is a 223-residue protein sequence, read N- to C-terminus: Ras-related protein Rab-37 (223 aa).

The segment at 1–23 (MTGTPGAVATRDGEAPERSPPCS) is disordered. Threonine 2 carries the N-acetylthreonine modification. Residues threonine 38, glycine 39, valine 40, glycine 41, lysine 42, threonine 43, cysteine 44, and threonine 62 each coordinate GTP. Threonine 43 serves as a coordination point for Mg(2+). 2 short sequence motifs (switch) span residues 52-67 (GAFL…GIDF) and 85-102 (DTAG…YYRD). Mg(2+) contacts are provided by threonine 62 and aspartate 85. GTP contacts are provided by glycine 88, asparagine 143, lysine 144, aspartate 146, methionine 147, serine 173, alanine 174, and lysine 175. Residues cysteine 219 and cysteine 220 are each lipidated (S-geranylgeranyl cysteine). Cysteine 220 is modified (cysteine methyl ester). The propeptide at 221-223 (SFM) is removed in mature form.

The protein belongs to the small GTPase superfamily. Rab family. Interacts with RIMS1. Interacts (in GDP-bound form) with RPGR, RPGR functions as guanine exchange factor (GEF). It depends on Mg(2+) as a cofactor.

It is found in the cytoplasmic vesicle. Its subcellular location is the cell projection. The protein resides in the cilium. The enzyme catalyses GTP + H2O = GDP + phosphate + H(+). Regulated by guanine nucleotide exchange factors (GEFs) including RPGR which promote the exchange of bound GDP for free GTP. Regulated by GTPase activating proteins (GAPs) which increase the GTP hydrolysis activity. Inhibited by GDP dissociation inhibitors (GDIs). Its function is as follows. The small GTPases Rab are key regulators of intracellular membrane trafficking, from the formation of transport vesicles to their fusion with membranes. Rabs cycle between an inactive GDP-bound form and an active GTP-bound form that is able to recruit to membranes different sets of downstream effectors directly responsible for vesicle formation, movement, tethering and fusion. Acts as an organizer for autophagosome biogenesis in a GTP-dependent manner. Involved in retinal homeostasis by autophagy regulation. The sequence is that of Ras-related protein Rab-37 from Homo sapiens (Human).